A 1428-amino-acid polypeptide reads, in one-letter code: DNA-directed RNA polymerase subunit beta' (1428 aa).

Zn(2+) is bound by residues Cys-66, Cys-68, Cys-81, and Cys-84. The Mg(2+) site is built by Asp-472, Asp-474, and Asp-476. The Zn(2+) site is built by Cys-816, Cys-890, Cys-897, and Cys-900.

It belongs to the RNA polymerase beta' chain family. As to quaternary structure, the RNAP catalytic core consists of 2 alpha, 1 beta, 1 beta' and 1 omega subunit. When a sigma factor is associated with the core the holoenzyme is formed, which can initiate transcription. Requires Mg(2+) as cofactor. Zn(2+) serves as cofactor.

It catalyses the reaction RNA(n) + a ribonucleoside 5'-triphosphate = RNA(n+1) + diphosphate. DNA-dependent RNA polymerase catalyzes the transcription of DNA into RNA using the four ribonucleoside triphosphates as substrates. The sequence is that of DNA-directed RNA polymerase subunit beta' from Phocaeicola vulgatus (strain ATCC 8482 / DSM 1447 / JCM 5826 / CCUG 4940 / NBRC 14291 / NCTC 11154) (Bacteroides vulgatus).